The sequence spans 135 residues: UPF0299 membrane protein YE2790 (135 aa).

A run of 4 helical transmembrane segments spans residues 4–24, 30–50, 63–83, and 93–113; these read VTSL…CLWA, LLLP…FALL, GCHL…VGVM, and FGPI…VVGY.

Belongs to the UPF0299 family.

It is found in the cell inner membrane. This is UPF0299 membrane protein YE2790 from Yersinia enterocolitica serotype O:8 / biotype 1B (strain NCTC 13174 / 8081).